A 257-amino-acid chain; its full sequence is 5'-nucleotidase SurE (257 aa).

D9, D10, S40, and N92 together coordinate a divalent metal cation.

It belongs to the SurE nucleotidase family. It depends on a divalent metal cation as a cofactor.

The protein localises to the cytoplasm. The catalysed reaction is a ribonucleoside 5'-phosphate + H2O = a ribonucleoside + phosphate. Its function is as follows. Nucleotidase that shows phosphatase activity on nucleoside 5'-monophosphates. This is 5'-nucleotidase SurE from Alkalilimnicola ehrlichii (strain ATCC BAA-1101 / DSM 17681 / MLHE-1).